The chain runs to 3081 residues: Cilia- and flagella-associated protein 54 (3081 aa).

9 disordered regions span residues 542–579 (SGTA…AGGA), 591–626 (TQTA…QSSL), 910–942 (PPQP…GARK), 1406–1451 (ADAP…GITP), 1518–1586 (ESIL…YPVV), 1636–1657 (RRAA…EERP), 2176–2210 (GERT…LPEP), 2229–2306 (MASG…SQRA), and 2776–2806 (ARPV…SGDG). Residues 564-579 (GGSASPPNGSSGAGGA) are compositionally biased toward low complexity. The segment covering 1428–1449 (MPPPVPDPSAAGPPPLTPPEGI) has biased composition (pro residues). Over residues 1538–1550 (GGKDDKKKDDKAP) the composition is skewed to basic and acidic residues. Composition is skewed to low complexity over residues 1638 to 1648 (AALAASASTAG), 2181 to 2199 (APKP…AAAA), and 2240 to 2269 (EPSS…SPTG). The segment covering 2289-2301 (PEVPGPPPPPPPS) has biased composition (pro residues). Residues 2776–2788 (ARPVATSSSGARP) show a composition bias toward low complexity. Over residues 2796–2805 (KPGAGGGSGD) the composition is skewed to gly residues.

It belongs to the CFAP54 family. As to quaternary structure, part of the PDCP1 complex composed of CFAP46, CFAP54, CFAP74 and CFAP221; the PDCP1 complex binds calmodulin.

It localises to the cytoplasm. The protein localises to the cytoskeleton. The protein resides in the cilium axoneme. The polypeptide is Cilia- and flagella-associated protein 54 (Chlamydomonas reinhardtii (Chlamydomonas smithii)).